The chain runs to 517 residues: Zinc finger protein 215 (517 aa).

The region spanning 48-126 (RQKFRHFQYL…EDMVTLIEDV (79 aa)) is the SCAN box domain. The KRAB domain maps to 164–237 (VTFKDVVVEF…EKEIPRKTIF (74 aa)). 4 consecutive C2H2-type zinc fingers follow at residues 379–401 (YECY…QIIH), 407–429 (YKCS…QKLH), 462–484 (YECV…QMIH), and 490–512 (FKCK…QKLH).

Belongs to the krueppel C2H2-type zinc-finger protein family.

The protein resides in the nucleus. Its function is as follows. May be involved in transcriptional regulation. This is Zinc finger protein 215 (ZNF215) from Pongo abelii (Sumatran orangutan).